A 924-amino-acid chain; its full sequence is Mediator of RNA polymerase II transcription subunit 16 (924 aa).

This sequence belongs to the Mediator complex subunit 16 family. Component of the Mediator complex.

The protein localises to the nucleus. Functionally, component of the Mediator complex, a coactivator involved in the regulated transcription of nearly all RNA polymerase II-dependent genes. Mediator functions as a bridge to convey information from gene-specific regulatory proteins to the basal RNA polymerase II transcription machinery. Mediator is recruited to promoters by direct interactions with regulatory proteins and serves as a scaffold for the assembly of a functional preinitiation complex with RNA polymerase II and the general transcription factors. The sequence is that of Mediator of RNA polymerase II transcription subunit 16 (SIN4) from Yarrowia lipolytica (strain CLIB 122 / E 150) (Yeast).